Reading from the N-terminus, the 408-residue chain is MTQSQTDLRNGPDATGMFGAFGGRYVAETLMPLILDLAREYEAAKEDPAFKEELAYFQRDYVGRPSPLYFAERLTEFCGGAKIYLKREELNHTGAHKINNCIGQILLARRMGKKRIIAETGAGMHGVATATVAARFGLQCVIYMGTTDIERQQANVFRMKLLGAEVIPVVAGTGTLKDAMNEALRDWVTNVEDTFYLIGTVAGPHPYPAMVRDFQAVIGKETRDQLQAQEGRLPDSLVACIGGGSNAMGLFHPFLDDKSVEIIGVEAAGHGIETGKHAASLNGGVPGVLHGNRTFLLQDDDGQIIDAHSISAGLDYPGIGPEHAWLHDIGRVQYTSVTDDEALDAFHKCCRLEGIIPALESAHALAEVFKRAPTLPKDHLMVVNLSGRGDKDMQTVMHHMETTKQEKH.

Lys97 carries the post-translational modification N6-(pyridoxal phosphate)lysine.

Belongs to the TrpB family. In terms of assembly, tetramer of two alpha and two beta chains. It depends on pyridoxal 5'-phosphate as a cofactor.

The enzyme catalyses (1S,2R)-1-C-(indol-3-yl)glycerol 3-phosphate + L-serine = D-glyceraldehyde 3-phosphate + L-tryptophan + H2O. The protein operates within amino-acid biosynthesis; L-tryptophan biosynthesis; L-tryptophan from chorismate: step 5/5. Functionally, the beta subunit is responsible for the synthesis of L-tryptophan from indole and L-serine. The protein is Tryptophan synthase beta chain (trpB) of Pseudomonas syringae pv. syringae.